The sequence spans 396 residues: Small ribosomal subunit protein mS27 (396 aa).

It belongs to the mitochondrion-specific ribosomal protein mS27 family. As to quaternary structure, component of the mitochondrial small ribosomal subunit (mt-SSU). Mature N.crassa 74S mitochondrial ribosomes consist of a small (37S) and a large (54S) subunit. The 37S small subunit contains a 16S ribosomal RNA (16S mt-rRNA) and 32 different proteins. The 54S large subunit contains a 23S rRNA (23S mt-rRNA) and 42 different proteins.

It localises to the mitochondrion. Component of the mitochondrial ribosome (mitoribosome), a dedicated translation machinery responsible for the synthesis of mitochondrial genome-encoded proteins, including at least some of the essential transmembrane subunits of the mitochondrial respiratory chain. The mitoribosomes are attached to the mitochondrial inner membrane and translation products are cotranslationally integrated into the membrane. This Neurospora crassa (strain ATCC 24698 / 74-OR23-1A / CBS 708.71 / DSM 1257 / FGSC 987) protein is Small ribosomal subunit protein mS27 (mrp13).